We begin with the raw amino-acid sequence, 220 residues long: MKTGALTTFLALCLPVTVFATTLRLSNEVDLLVLDGKKVSSSLLRGAESIELENGPHQLVFRVEKTIRLPGNEERLYISPPLVISFDTQLINQVNFQLPRLENEREASHFNAAPRLALLDGDAMPIPVKLDILAITSTAKVVDYEIETERYNKSAKRASLPQFATMMADDSTLLSDVSELDTVPPQSQTLTEQRLKYWFRLADPQTRHHFLQWAEKQPPS.

The first 20 residues, 1–20 (MKTGALTTFLALCLPVTVFA), serve as a signal peptide directing secretion.

It belongs to the UPF0319 family.

The polypeptide is UPF0319 protein YccT (Salmonella schwarzengrund (strain CVM19633)).